Here is a 94-residue protein sequence, read N- to C-terminus: Small ribosomal subunit protein uS19 (94 aa).

The protein belongs to the universal ribosomal protein uS19 family.

Functionally, protein S19 forms a complex with S13 that binds strongly to the 16S ribosomal RNA. This Lactobacillus acidophilus (strain ATCC 700396 / NCK56 / N2 / NCFM) protein is Small ribosomal subunit protein uS19 (rpsS).